Consider the following 260-residue polypeptide: Imidazole glycerol phosphate synthase subunit HisF (260 aa).

Active-site residues include D11 and D130.

The protein belongs to the HisA/HisF family. In terms of assembly, heterodimer of HisH and HisF.

It is found in the cytoplasm. It carries out the reaction 5-[(5-phospho-1-deoxy-D-ribulos-1-ylimino)methylamino]-1-(5-phospho-beta-D-ribosyl)imidazole-4-carboxamide + L-glutamine = D-erythro-1-(imidazol-4-yl)glycerol 3-phosphate + 5-amino-1-(5-phospho-beta-D-ribosyl)imidazole-4-carboxamide + L-glutamate + H(+). It functions in the pathway amino-acid biosynthesis; L-histidine biosynthesis; L-histidine from 5-phospho-alpha-D-ribose 1-diphosphate: step 5/9. Its function is as follows. IGPS catalyzes the conversion of PRFAR and glutamine to IGP, AICAR and glutamate. The HisF subunit catalyzes the cyclization activity that produces IGP and AICAR from PRFAR using the ammonia provided by the HisH subunit. In Thermomicrobium roseum (strain ATCC 27502 / DSM 5159 / P-2), this protein is Imidazole glycerol phosphate synthase subunit HisF.